Here is a 487-residue protein sequence, read N- to C-terminus: Histamine H1 receptor (487 aa).

Residues 1 to 29 (MSLPNSSCLLEDKMCESNKTTMASPQLMP) lie on the Extracellular side of the membrane. N-linked (GlcNAc...) asparagine glycans are attached at residues Asn5 and Asn18. Residues 30 to 50 (LVVVLSTICLVTVGLNLLVLY) traverse the membrane as a helical segment. At 51 to 64 (AVRSERKLHTVGNL) the chain is on the cytoplasmic side. The chain crosses the membrane as a helical span at residues 65–89 (YIVSLSVADLIVGAVVMPMNILYLL). The Extracellular portion of the chain corresponds to 90 to 97 (MSKWSLGR). The chain crosses the membrane as a helical span at residues 98-123 (PLCLFWLSMDYVASTASIFSVFILCI). A disulfide bond links Cys100 and Cys180. Histamine is bound by residues Asp107 and Thr112. Positions 107 to 112 (DYVAST) are important for agonist binding. The Cytoplasmic portion of the chain corresponds to 124-144 (DRYRSVQQPLRYLKYRTKTRA). Phosphothreonine occurs at positions 140 and 142. Residues 145-164 (SATILGAWFLSFLWVIPILG) traverse the membrane as a helical segment. Topologically, residues 165-188 (WNHFMQQTSVRREDKCETDFYDVT) are extracellular. Residues 189 to 211 (WFKVMTAIINFYLPTLLMLWFYA) traverse the membrane as a helical segment. Asn198 provides a ligand contact to histamine. Residues 212–416 (KIYKAVRQHC…MNRERKAAKQ (205 aa)) lie on the Cytoplasmic side of the membrane. Position 230 is a phosphoserine (Ser230). Over residues 238–261 (KLRPENPKGDAKKPGKESPWEVLK) the composition is skewed to basic and acidic residues. Positions 238-292 (KLRPENPKGDAKKPGKESPWEVLKRKPKDAGGGSVLKSPSQTPKEMKSPVVFSQE) are disordered. Thr279 carries the post-translational modification Phosphothreonine. Phosphoserine is present on residues Ser344 and Ser347. The segment at 345-377 (EISEDQMLGDSQSFSRTDSDTTTETASGKGKLR) is disordered. A compositionally biased stretch (polar residues) spans 353-370 (GDSQSFSRTDSDTTTETA). Phosphoserine is present on residues Ser380, Ser396, and Ser398. Residues 417–440 (LGFIMAAFILCWIPYFIFFMVIAF) traverse the membrane as a helical segment. The important for agonist binding stretch occupies residues 424 to 428 (FILCW). Tyr431 provides a ligand contact to histamine. An intrachain disulfide couples Cys441 to Cys444. The Extracellular segment spans residues 441 to 446 (CKNCCN). The chain crosses the membrane as a helical span at residues 447–469 (EHLHMFTIWLGYINSTLNPLIYP). The Cytoplasmic segment spans residues 470 to 487 (LCNENFKKTFKRILHIRS).

The protein belongs to the G-protein coupled receptor 1 family. Post-translationally, phosphorylation at sites in the second and third cytoplasmic loops independently contribute to agonist-induced receptor down-regulation.

The protein localises to the cell membrane. Its function is as follows. G-protein-coupled receptor for histamine, a biogenic amine that functions as an immune modulator and a neurotransmitter. Through the H1 receptor, histamine mediates the contraction of smooth muscles and increases capillary permeability due to contraction of terminal venules. Also mediates neurotransmission in the central nervous system and thereby regulates circadian rhythms, emotional and locomotor activities as well as cognitive functions. This chain is Histamine H1 receptor, found in Gorilla gorilla gorilla (Western lowland gorilla).